Consider the following 431-residue polypeptide: Elongation factor 1-gamma (431 aa).

Residues 2–84 enclose the GST N-terminal domain; sequence VKGTLYTYPE…LLANEQLRGG (83 aa). The 127-residue stretch at 86 to 212 folds into the GST C-terminal domain; that stretch reads CPFVQAQVQQ…YKLCEKALVF (127 aa). The interval 223-261 is disordered; it reads KTGAAKPQQQAQQQKQEKKPKEKKEAPKKAAEPAEELDA. Positions 226–236 are enriched in low complexity; sequence AAKPQQQAQQQ. The segment covering 237 to 254 has biased composition (basic and acidic residues); sequence KQEKKPKEKKEAPKKAAE. In terms of domain architecture, EF-1-gamma C-terminal spans 272–431; sequence SKDPFDALPK…RKFNQGKIFK (160 aa). Position 294 is a phosphoserine (S294).

As to quaternary structure, interacts with microtubules. May interact with BicDR; the interaction is probably indirect. Interacts (via C-terminus) with Doa; the interaction is probably direct, is transient and leads to phosphorylation of eEF1gamma by Doa. EF-1 is composed of four subunits: alpha, beta, delta, and gamma. Phosphorylated on Ser-294 by LAMMER kinases, including Doa. Phosphorylation on Ser-294 by Doa is required for negative regulation of microtubule-based transport.

Its subcellular location is the cytoplasm. The protein localises to the nucleus. The protein resides in the cytoskeleton. Functionally, microtubule binding protein involved in regulation of microtubule-based transport. Probably plays a role in anchoring the EF-1 complex to other cellular components. Probably involved in formation and/or development of mechanosensory organs during metamorphosis. Required for cellular and organismal viability. Not essential for the innate immune response to bacterial infection. In Drosophila melanogaster (Fruit fly), this protein is Elongation factor 1-gamma.